A 296-amino-acid chain; its full sequence is Ribonuclease MRP protein subunit POP4 (296 aa).

2 disordered regions span residues 29-74 and 148-173; these read LLQQ…VDPK and SASG…KRLK. Basic and acidic residues predominate over residues 36 to 56; sequence KNEKDKKGTSDVDVSMKESHQ. Over residues 57–66 the composition is skewed to polar residues; sequence ADSLPTPSKT. Positions 160 to 167 match the Nuclear localization signal motif; that stretch reads SKRSKSRM. Positions 163-173 are enriched in basic residues; sequence SKSRMSMKRLK.

This sequence belongs to the eukaryotic/archaeal RNase P protein component 1 family. In terms of assembly, component of nuclear RNase MRP complexes. Several subunits of RNase P are also part of the RNase MRP complex. RNase MRP consists of a catalytic RNA moiety and several protein subunits.

The protein resides in the nucleus. Functionally, component of the MRP ribonuclease complex, which cleaves pre-rRNA sequences. Required for rRNA maturation, including 5.8S rRNA processing. Seems not involved in tRNA maturation. The protein is Ribonuclease MRP protein subunit POP4 of Arabidopsis thaliana (Mouse-ear cress).